We begin with the raw amino-acid sequence, 251 residues long: uncharacterized protein (251 aa).

Belongs to the chlamydial CPn_0206/CT_203/TC_0475 family.

This is an uncharacterized protein from Chlamydia trachomatis serovar D (strain ATCC VR-885 / DSM 19411 / UW-3/Cx).